Here is a 520-residue protein sequence, read N- to C-terminus: Protein root UVB sensitive 4 (520 aa).

The next 2 helical transmembrane spans lie at 275–295 and 301–321; these read IQTV…NMLF and LQAC…LLGI.

The protein belongs to the RUS1 family.

It is found in the membrane. This Arabidopsis thaliana (Mouse-ear cress) protein is Protein root UVB sensitive 4.